A 447-amino-acid chain; its full sequence is Alkylglycerol monooxygenase (447 aa).

The next 2 helical transmembrane spans lie at 43–63 (ATPFFIFLILLELVVSWILKG) and 111–131 (WDSPWTWYLTFLGVDFGYYWF). Positions 118–249 (YLTFLGVDFG…LIIWDRIFGT (132 aa)) constitute a Fatty acid hydroxylase domain. The short motif at 132-136 (HRMAH) is the Histidine box-1 element. The short motif at 145–149 (HQAHH) is the Histidine box-2 element. The chain crosses the membrane as a helical span at residues 170–190 (SWVFYCPLALFVPPSVFAVHI). A Histidine box-3 motif is present at residues 221-225 (HRVHH). 3 helical membrane-spanning segments follow: residues 334–354 (FLKIYAVLQFAVMLVFYEETF), 363–383 (VTILLRICFIILTLTSIGFLL), and 413–433 (IESLSFAFEIFFSVCIAFWGV).

This sequence belongs to the sterol desaturase family. TMEM195 subfamily. The cofactor is Fe cation.

It localises to the endoplasmic reticulum membrane. The enzyme catalyses 1-O-(1,2-saturated-alkyl)-sn-glycerol + (6R)-L-erythro-5,6,7,8-tetrahydrobiopterin + O2 = a 1-(1-hydroxyalkyl)-sn-glycerol + (6R)-L-erythro-6,7-dihydrobiopterin + H2O. Its function is as follows. Glyceryl-ether monooxygenase that cleaves the O-alkyl bond of ether lipids. Ether lipids are essential components of brain membranes. The protein is Alkylglycerol monooxygenase (Agmo) of Rattus norvegicus (Rat).